Reading from the N-terminus, the 229-residue chain is Putative N-acetylmannosamine-6-phosphate 2-epimerase (229 aa).

It belongs to the NanE family.

It catalyses the reaction an N-acyl-D-glucosamine 6-phosphate = an N-acyl-D-mannosamine 6-phosphate. It participates in amino-sugar metabolism; N-acetylneuraminate degradation; D-fructose 6-phosphate from N-acetylneuraminate: step 3/5. Its function is as follows. Converts N-acetylmannosamine-6-phosphate (ManNAc-6-P) to N-acetylglucosamine-6-phosphate (GlcNAc-6-P). This is Putative N-acetylmannosamine-6-phosphate 2-epimerase from Shigella sonnei (strain Ss046).